The primary structure comprises 562 residues: Arginine--tRNA ligase (562 aa).

A 'HIGH' region motif is present at residues 129–139 (ANPTGPLHVGH).

The protein belongs to the class-I aminoacyl-tRNA synthetase family. As to quaternary structure, monomer.

It is found in the cytoplasm. It catalyses the reaction tRNA(Arg) + L-arginine + ATP = L-arginyl-tRNA(Arg) + AMP + diphosphate. The protein is Arginine--tRNA ligase of Xanthomonas campestris pv. campestris (strain B100).